Here is a 511-residue protein sequence, read N- to C-terminus: Bifunctional purine biosynthesis protein PurH (511 aa).

The 145-residue stretch at 1 to 145 (MKKRALVSVS…KNHKFVSVIV (145 aa)) folds into the MGS-like domain.

The protein belongs to the PurH family.

It catalyses the reaction (6R)-10-formyltetrahydrofolate + 5-amino-1-(5-phospho-beta-D-ribosyl)imidazole-4-carboxamide = 5-formamido-1-(5-phospho-D-ribosyl)imidazole-4-carboxamide + (6S)-5,6,7,8-tetrahydrofolate. It carries out the reaction IMP + H2O = 5-formamido-1-(5-phospho-D-ribosyl)imidazole-4-carboxamide. The protein operates within purine metabolism; IMP biosynthesis via de novo pathway; 5-formamido-1-(5-phospho-D-ribosyl)imidazole-4-carboxamide from 5-amino-1-(5-phospho-D-ribosyl)imidazole-4-carboxamide (10-formyl THF route): step 1/1. It functions in the pathway purine metabolism; IMP biosynthesis via de novo pathway; IMP from 5-formamido-1-(5-phospho-D-ribosyl)imidazole-4-carboxamide: step 1/1. The protein is Bifunctional purine biosynthesis protein PurH of Bacillus cereus (strain ATCC 10987 / NRS 248).